The primary structure comprises 110 residues: Bowman-Birk type proteinase inhibitor (110 aa).

The first 28 residues, 1–28 (MVLMNKKAIMKLALMLFLLGFTANVVDA), serve as a signal peptide directing secretion. The propeptide occupies 29–42 (RFDSTSFITQVLSN). Cystine bridges form between C50–C103, C51–C66, C54–C99, C56–C64, C73–C80, C77–C92, and C82–C90.

As to quaternary structure, monomer.

Functionally, inhibitor of trypsin and of chymotrypsin. This chain is Bowman-Birk type proteinase inhibitor, found in Lens culinaris (Lentil).